We begin with the raw amino-acid sequence, 456 residues long: Smoothelin-like protein 2 (456 aa).

Residues 24 to 88 (LEGAVRALHE…RQVEALGLAT (65 aa)) are a coiled coil. Threonine 96 is modified (phosphothreonine). Phosphoserine is present on residues serine 98, serine 126, and serine 131. Residues 120-129 (HATFSLSGRS) show a composition bias toward polar residues. Disordered regions lie at residues 120-140 (HATFSLSGRSPSVEHDEASDL), 154-190 (GHQLDAGPANGSSEVQTSSAQEPPRPRPVSLSLRMPH), and 220-310 (VGGF…GAQA). A compositionally biased stretch (basic and acidic residues) spans 131-140 (SVEHDEASDL). Polar residues predominate over residues 163–174 (NGSSEVQTSSAQ). Residues 242–251 (SSSFTRSLSG) are compositionally biased toward low complexity. A phosphoserine mark is found at serine 250, serine 252, and serine 265. Pro residues predominate over residues 268–279 (LVTPPQSPPSSQ). Threonine 270 carries the phosphothreonine modification. The residue at position 274 (serine 274) is a Phosphoserine. The segment covering 298 to 308 (RSQTLPRTSGA) has biased composition (polar residues). Residue serine 339 is modified to Phosphoserine. The 108-residue stretch at 346–453 (SSIKQILLEW…YVQSLYNHLR (108 aa)) folds into the Calponin-homology (CH) domain.

The protein belongs to the smoothelin family.

The chain is Smoothelin-like protein 2 (Smtnl2) from Mus musculus (Mouse).